Consider the following 186-residue polypeptide: Elongation factor P (186 aa).

Belongs to the elongation factor P family.

The protein resides in the cytoplasm. It participates in protein biosynthesis; polypeptide chain elongation. Its function is as follows. Involved in peptide bond synthesis. Stimulates efficient translation and peptide-bond synthesis on native or reconstituted 70S ribosomes in vitro. Probably functions indirectly by altering the affinity of the ribosome for aminoacyl-tRNA, thus increasing their reactivity as acceptors for peptidyl transferase. This chain is Elongation factor P, found in Prochlorococcus marinus (strain MIT 9312).